A 194-amino-acid chain; its full sequence is Interleukin-18 (194 aa).

Residues 1-36 constitute a propeptide that is removed on maturation; sequence MAAMSEEGSCVNFKEMMFIDNTLYLIPEDNGDLESD.

Belongs to the IL-1 family. In terms of assembly, forms a ternary complex with ligand-binding receptor subunit IL18R1 and signaling receptor subunit IL18RAP at the plasma membrane. Mature IL18 first binds to IL18R1 forming a low affinity binary complex, which then interacts with IL18RAP to form a high affinity ternary complex that signals inside the cell. Interacts with cargo receptor TMED10; the interaction mediates the translocation from the cytoplasm into the ERGIC (endoplasmic reticulum-Golgi intermediate compartment) and thereby secretion. In terms of processing, the pro-IL-18 precursor is processed by CASP1 to yield its mature, active form. The pro-IL-18 precursor is however not processed by Casp4/Casp11 in rodents. The pro-IL-18 precursor features autoinhibitory interactions between the propeptide and the post-cleavage-site region, preventing recognition by the IL18R1 receptor. Processing by CASP1 induces conformational changes to generate critical receptor-binding sites. The mature form is then secreted and released in the extracellular milieu by passing through the gasdermin-D (GSDMD) pore. In contrast, cleavage by CASP3 inactivates IL18.

It localises to the cytoplasm. The protein localises to the cytosol. Its subcellular location is the secreted. Its function is as follows. Pro-inflammatory cytokine primarily involved in epithelial barrier repair, polarized T-helper 1 (Th1) cell and natural killer (NK) cell immune responses. Upon binding to IL18R1 and IL18RAP, forms a signaling ternary complex which activates NF-kappa-B, triggering synthesis of inflammatory mediators. Synergizes with IL12/interleukin-12 to induce IFNG synthesis from T-helper 1 (Th1) cells and natural killer (NK) cells. Involved in transduction of inflammation downstream of pyroptosis: its mature form is specifically released in the extracellular milieu by passing through the gasdermin-D (GSDMD) pore. In Rattus norvegicus (Rat), this protein is Interleukin-18 (Il18).